The primary structure comprises 366 residues: Adenosine deaminase (366 aa).

H19 and H21 together coordinate Zn(2+). The substrate site is built by H21, D23, and G181. H208 is a binding site for Zn(2+). The active-site Proton donor is the E211. Residue D304 coordinates Zn(2+).

This sequence belongs to the metallo-dependent hydrolases superfamily. Adenosine and AMP deaminases family. Adenosine deaminase subfamily. It depends on Zn(2+) as a cofactor.

The catalysed reaction is adenosine + H2O + H(+) = inosine + NH4(+). It catalyses the reaction 2'-deoxyadenosine + H2O + H(+) = 2'-deoxyinosine + NH4(+). In terms of biological role, catalyzes the hydrolytic deamination of adenosine and 2-deoxyadenosine. This is Adenosine deaminase from Mycobacterium avium (strain 104).